Consider the following 198-residue polypeptide: Beta-crystallin A1 (198 aa).

Positions 1-13 are N-terminal arm; it reads MAQINPLPVPLGP. Beta/gamma crystallin 'Greek key' domains lie at 14–53 and 54–100; these read WKITVYDQENFQGKRMEFTSSCANIMECGFDNIRSLKVEC and GGWI…RPIC. The tract at residues 101–106 is connecting peptide; that stretch reads SANHKE. Beta/gamma crystallin 'Greek key' domains are found at residues 107 to 148 and 149 to 197; these read SKLV…KVQC and GSWV…RRIQ.

The protein belongs to the beta/gamma-crystallin family. As to quaternary structure, homo/heterodimer, or complexes of higher-order. The structure of beta-crystallin oligomers seems to be stabilized through interactions between the N-terminal arms.

Functionally, crystallins are the dominant structural components of the vertebrate eye lens. The protein is Beta-crystallin A1 of Rana temporaria (European common frog).